We begin with the raw amino-acid sequence, 449 residues long: UDP-N-acetylmuramate--L-alanine ligase (449 aa).

121–127 (GAHGKSS) contributes to the ATP binding site.

This sequence belongs to the MurCDEF family.

It is found in the cytoplasm. It catalyses the reaction UDP-N-acetyl-alpha-D-muramate + L-alanine + ATP = UDP-N-acetyl-alpha-D-muramoyl-L-alanine + ADP + phosphate + H(+). It functions in the pathway cell wall biogenesis; peptidoglycan biosynthesis. Functionally, cell wall formation. This Helicobacter pylori (strain ATCC 700392 / 26695) (Campylobacter pylori) protein is UDP-N-acetylmuramate--L-alanine ligase.